A 98-amino-acid polypeptide reads, in one-letter code: NADH-ubiquinone oxidoreductase chain 4L (98 aa).

3 consecutive transmembrane segments (helical) span residues 1-21, 29-49, and 61-81; these read MSMV…GLLM, SLLC…MTIL, and IILL…LVMV.

The protein belongs to the complex I subunit 4L family. In terms of assembly, core subunit of respiratory chain NADH dehydrogenase (Complex I) which is composed of 45 different subunits.

It is found in the mitochondrion inner membrane. The enzyme catalyses a ubiquinone + NADH + 5 H(+)(in) = a ubiquinol + NAD(+) + 4 H(+)(out). Core subunit of the mitochondrial membrane respiratory chain NADH dehydrogenase (Complex I) which catalyzes electron transfer from NADH through the respiratory chain, using ubiquinone as an electron acceptor. Part of the enzyme membrane arm which is embedded in the lipid bilayer and involved in proton translocation. The protein is NADH-ubiquinone oxidoreductase chain 4L (MT-ND4L) of Otaria byronia (South American sea lion).